The chain runs to 24 residues: Brevinin-1La (24 aa).

Cysteine 18 and cysteine 24 are oxidised to a cystine.

Expressed by the skin glands.

It localises to the secreted. Its function is as follows. Antibacterial activity against Gram-positive bacterium S.aureus and Gram-negative bacterium E.coli. This chain is Brevinin-1La, found in Rana luteiventris (Columbia spotted frog).